A 249-amino-acid polypeptide reads, in one-letter code: MSMPFYVSPEQIMKDKADYARKGIARGRSAVVLQYEGGILFVADNVSRTLHKISELYDRVAFAAVGRYNEFENLRLAGVRFADMHGYTYDRSDVTGQMLANAYAQTLGAVFTESSKPWEVEIVVAEVGDSPDSDQIYRITFDGSVVDERDFLAMGGSAERVTAALRERYVKNMSLTDALRVAVHGLAHENGERRELKASSLEVAMLERSRPHRKFRRIQGERLARMLQEAREAEEAAEAQSSEDGGATD.

The disordered stretch occupies residues 229–249; that stretch reads EAREAEEAAEAQSSEDGGATD.

It belongs to the peptidase T1A family. In terms of assembly, the 20S proteasome core is composed of 14 alpha and 14 beta subunits that assemble into four stacked heptameric rings, resulting in a barrel-shaped structure. The two inner rings, each composed of seven catalytic beta subunits, are sandwiched by two outer rings, each composed of seven alpha subunits. The catalytic chamber with the active sites is on the inside of the barrel. Has a gated structure, the ends of the cylinder being occluded by the N-termini of the alpha-subunits. Is capped by the proteasome-associated ATPase, ARC.

Its subcellular location is the cytoplasm. It functions in the pathway protein degradation; proteasomal Pup-dependent pathway. The formation of the proteasomal ATPase ARC-20S proteasome complex, likely via the docking of the C-termini of ARC into the intersubunit pockets in the alpha-rings, may trigger opening of the gate for substrate entry. Interconversion between the open-gate and close-gate conformations leads to a dynamic regulation of the 20S proteasome proteolysis activity. Component of the proteasome core, a large protease complex with broad specificity involved in protein degradation. The chain is Proteasome subunit alpha from Thermobifida fusca (strain YX).